The sequence spans 240 residues: Large ribosomal subunit protein bL25 (240 aa).

Disordered stretches follow at residues 1–20 and 204–240; these read MAENVLSAQKRTEQGKGPAR and GAAPAAGAAAPAGGAAPAAGAAPAKGGEAKGGDKAKK. Residues 204 to 229 are compositionally biased toward low complexity; sequence GAAPAAGAAAPAGGAAPAAGAAPAKG. Over residues 230–240 the composition is skewed to basic and acidic residues; the sequence is GEAKGGDKAKK.

The protein belongs to the bacterial ribosomal protein bL25 family. CTC subfamily. Part of the 50S ribosomal subunit; part of the 5S rRNA/L5/L18/L25 subcomplex. Contacts the 5S rRNA. Binds to the 5S rRNA independently of L5 and L18.

This is one of the proteins that binds to the 5S RNA in the ribosome where it forms part of the central protuberance. The polypeptide is Large ribosomal subunit protein bL25 (Anaeromyxobacter sp. (strain K)).